The sequence spans 421 residues: Glutamate-1-semialdehyde 2,1-aminomutase (421 aa).

Residue lysine 261 is modified to N6-(pyridoxal phosphate)lysine.

This sequence belongs to the class-III pyridoxal-phosphate-dependent aminotransferase family. HemL subfamily. It depends on pyridoxal 5'-phosphate as a cofactor.

It is found in the cytoplasm. The enzyme catalyses (S)-4-amino-5-oxopentanoate = 5-aminolevulinate. Its pathway is porphyrin-containing compound metabolism; protoporphyrin-IX biosynthesis; 5-aminolevulinate from L-glutamyl-tRNA(Glu): step 2/2. The sequence is that of Glutamate-1-semialdehyde 2,1-aminomutase (hemL) from Thermoplasma acidophilum (strain ATCC 25905 / DSM 1728 / JCM 9062 / NBRC 15155 / AMRC-C165).